A 703-amino-acid polypeptide reads, in one-letter code: RING finger protein 214 (703 aa).

Disordered stretches follow at residues 1-59 (MAAS…TITK), 104-134 (GSQS…VTRS), and 146-197 (SRNC…SSSL). A2 bears the N-acetylalanine mark. Residues S15, S40, S47, and S54 each carry the phosphoserine modification. A compositionally biased stretch (polar residues) spans 37-59 (TKDSAQKQKNSPLLSVSSQTITK). S176 and S196 each carry phosphoserine. Residues 220-379 (QDIEKNLDKM…AEKEAELHLT (160 aa)) adopt a coiled-coil conformation. The segment at 486-552 (FPILNPALSQ…SAETPRPQPV (67 aa)) is disordered. Residues 493-504 (LSQPSQPSSPLP) are compositionally biased toward low complexity. Residues S497, S511, and S516 each carry the phosphoserine modification. The span at 523-536 (PHMPPAASIPPPPG) shows a compositional bias: pro residues. The RING-type; atypical zinc finger occupies 658–700 (CLMCQKLVQPSELHPMACTHVLHKECIKFWAQTNTNDTCPFCP).

This Homo sapiens (Human) protein is RING finger protein 214 (RNF214).